Consider the following 413-residue polypeptide: Probable inactive allantoicase (413 aa).

It belongs to the allantoicase family.

Its function is as follows. The function of this enzyme is unclear as allantoicase activity is not known to exist in mammals. In Rattus norvegicus (Rat), this protein is Probable inactive allantoicase.